Reading from the N-terminus, the 258-residue chain is Lipoprotein-releasing system ATP-binding protein LolD (258 aa).

The region spanning 5-244 is the ABC transporter domain; sequence LQCCQLSKSY…PTSSITDPAN (240 aa). 41–48 contributes to the ATP binding site; that stretch reads GSSGCGKS. The interval 222-258 is disordered; the sequence is LRPLSDNSEQALPPTSSITDPANNIKDNEPQANERHV. The span at 226 to 243 shows a compositional bias: polar residues; the sequence is SDNSEQALPPTSSITDPA. The segment covering 247–258 has biased composition (basic and acidic residues); sequence KDNEPQANERHV.

Belongs to the ABC transporter superfamily. Lipoprotein translocase (TC 3.A.1.125) family. In terms of assembly, the complex is composed of two ATP-binding proteins (LolD) and two transmembrane proteins (LolC and LolE).

The protein localises to the cell inner membrane. In terms of biological role, part of the ABC transporter complex LolCDE involved in the translocation of mature outer membrane-directed lipoproteins, from the inner membrane to the periplasmic chaperone, LolA. Responsible for the formation of the LolA-lipoprotein complex in an ATP-dependent manner. This is Lipoprotein-releasing system ATP-binding protein LolD from Colwellia psychrerythraea (strain 34H / ATCC BAA-681) (Vibrio psychroerythus).